The chain runs to 800 residues: Phenylalanine--tRNA ligase beta subunit (800 aa).

In terms of domain architecture, tRNA-binding spans 39 to 154 (TKDIKKLVVG…EAVKPGTDAL (116 aa)). A B5 domain is found at 408-483 (SFVTPIEITA…RIYGYDEIPS (76 aa)). Residues D461, D467, E470, and E471 each coordinate Mg(2+). The FDX-ACB domain maps to 708–800 (PRFPGVTRDI…ALKKHGAIIR (93 aa)).

The protein belongs to the phenylalanyl-tRNA synthetase beta subunit family. Type 1 subfamily. As to quaternary structure, tetramer of two alpha and two beta subunits. Mg(2+) is required as a cofactor.

The protein resides in the cytoplasm. The catalysed reaction is tRNA(Phe) + L-phenylalanine + ATP = L-phenylalanyl-tRNA(Phe) + AMP + diphosphate + H(+). This Staphylococcus epidermidis (strain ATCC 12228 / FDA PCI 1200) protein is Phenylalanine--tRNA ligase beta subunit.